A 476-amino-acid chain; its full sequence is Ribosomal RNA small subunit methyltransferase F (476 aa).

S-adenosyl-L-methionine contacts are provided by residues 124-130 (ASAPGSK), Glu148, Asp175, and Asp193. The Nucleophile role is filled by Cys246.

The protein belongs to the class I-like SAM-binding methyltransferase superfamily. RsmB/NOP family.

Its subcellular location is the cytoplasm. The enzyme catalyses cytidine(1407) in 16S rRNA + S-adenosyl-L-methionine = 5-methylcytidine(1407) in 16S rRNA + S-adenosyl-L-homocysteine + H(+). Functionally, specifically methylates the cytosine at position 1407 (m5C1407) of 16S rRNA. In Photobacterium profundum (strain SS9), this protein is Ribosomal RNA small subunit methyltransferase F.